Reading from the N-terminus, the 1209-residue chain is Nitric oxide synthase (1209 aa).

Ser-103 provides a ligand contact to (6R)-L-erythro-5,6,7,8-tetrahydrobiopterin. Heme b is bound at residue Cys-181. L-arginine is bound by residues Gln-244, Trp-353, Tyr-354, Glu-358, and Asn-363. Trp-444 and Phe-457 together coordinate (6R)-L-erythro-5,6,7,8-tetrahydrobiopterin. Tyr-472 contributes to the heme b binding site. Residues 491-511 are calmodulin-binding; the sequence is VHRKFHFKQIARAVKFTSKLF. Positions 521 to 723 constitute a Flavodoxin-like domain; it reads ATILYATETG…QFRAWSSKIF (203 aa). 527 to 531 contacts FMN; the sequence is TETGK. The segment at 603–622 is disordered; that stretch reads RGDGTSDLGSGTFKTPTPKS. Residue 669-700 coordinates FMN; it reads VFGLGSSAYPKFCHFGKTVDKILGDLGGERIL. An FAD-binding FR-type domain is found at 776 to 1021; the sequence is KQLITCKVKE…IRRAPSFHMP (246 aa). FAD is bound by residues 811–822 and 954–964; these read YDPGDHVGVLAC and LQPRFYSISSS. NADP(+)-binding positions include 1028–1147 and 1128–1143; these read LILV…QQKL and NGHF…AEEV.

It belongs to the NOS family. The cofactor is heme b. Requires FAD as cofactor. It depends on FMN as a cofactor. Constitutively expressed at a low level in the larval fat body, hemocyte, Malpighian tubule, midgut, silk gland and adult antenna.

It catalyses the reaction 2 L-arginine + 3 NADPH + 4 O2 + H(+) = 2 L-citrulline + 2 nitric oxide + 3 NADP(+) + 4 H2O. Expression is dependent on and stimulated by NADPH, calcium, BH4 and calmodulin. The activity is not dependent on FAD and is not stimulated by its presence. In terms of biological role, produces nitric oxide (NO) which is a messenger molecule with diverse functions throughout the body. Involved in the induction of immune gene expression. This chain is Nitric oxide synthase, found in Bombyx mori (Silk moth).